The sequence spans 211 residues: Uracil phosphoribosyltransferase (211 aa).

5-phospho-alpha-D-ribose 1-diphosphate-binding positions include arginine 78, arginine 103, and 130 to 138; that span reads DPMLATGAT. Residues isoleucine 195 and 200-202 each bind uracil; that span reads GDA. 5-phospho-alpha-D-ribose 1-diphosphate is bound at residue aspartate 201.

It belongs to the UPRTase family. Requires Mg(2+) as cofactor.

The catalysed reaction is UMP + diphosphate = 5-phospho-alpha-D-ribose 1-diphosphate + uracil. It functions in the pathway pyrimidine metabolism; UMP biosynthesis via salvage pathway; UMP from uracil: step 1/1. With respect to regulation, allosterically activated by GTP. Functionally, catalyzes the conversion of uracil and 5-phospho-alpha-D-ribose 1-diphosphate (PRPP) to UMP and diphosphate. The chain is Uracil phosphoribosyltransferase from Renibacterium salmoninarum (strain ATCC 33209 / DSM 20767 / JCM 11484 / NBRC 15589 / NCIMB 2235).